Reading from the N-terminus, the 237-residue chain is Class B acid phosphatase (237 aa).

A signal peptide spans 1 to 25; that stretch reads MRKLTLAFAAASLLFTLNSAVVARA. D69 functions as the Nucleophile in the catalytic mechanism. Mg(2+) contacts are provided by D69 and D71. The active-site Proton donor is D71. Substrate is bound by residues 137–138 and K177; that span reads TG. D192 provides a ligand contact to Mg(2+).

This sequence belongs to the class B bacterial acid phosphatase family. As to quaternary structure, homotetramer. The cofactor is Mg(2+).

It localises to the periplasm. It carries out the reaction a phosphate monoester + H2O = an alcohol + phosphate. In terms of biological role, dephosphorylates several organic phosphate monoesters. Also has a phosphotransferase activity catalyzing the transfer of low-energy phosphate groups from organic phosphate monoesters to free hydroxyl groups of various organic compounds. In Klebsiella pneumoniae (strain 342), this protein is Class B acid phosphatase.